The following is a 507-amino-acid chain: Inositol-3-phosphate synthase (507 aa).

Residues G70, G71, N72, N73, D143, I180, Q190, R193, T230, A231, N232, T233, G281, S282, D306, S309, N340, N341, D342, K355, A391, D419, and S420 each coordinate NAD(+).

This sequence belongs to the myo-inositol 1-phosphate synthase family. The cofactor is NAD(+).

It is found in the cytoplasm. Its subcellular location is the cytosol. It localises to the nucleus. It catalyses the reaction D-glucose 6-phosphate = 1D-myo-inositol 3-phosphate. Its pathway is polyol metabolism; myo-inositol biosynthesis; myo-inositol from D-glucose 6-phosphate: step 1/2. Key enzyme in myo-inositol biosynthesis pathway that catalyzes the conversion of glucose 6-phosphate to 1-myo-inositol 1-phosphate in a NAD-dependent manner. The chain is Inositol-3-phosphate synthase from Citrus paradisi (Grapefruit).